We begin with the raw amino-acid sequence, 278 residues long: Probable aquaporin PIP2-8 (278 aa).

Methionine 1 carries the N-acetylmethionine modification. Over 1–36 (MSKEVSEEGRHGKDYVDPPPAPLLDMAELKLWSFYR) the chain is Cytoplasmic. Residue lysine 3 is modified to N6,N6-dimethyllysine. Residues 37 to 57 (AIIAEFIATLLFLYVTVATVI) form a helical membrane-spanning segment. Residues 58-74 (GHKNQTGPCGGVGLLGI) are Extracellular-facing. Residues 75–95 (AWAFGGMIFVLVYCTAGISGG) form a helical membrane-spanning segment. At 96 to 116 (HINPAVTFGLFLARKVSLPRA) the chain is on the cytoplasmic side. Residues 98–100 (NPA) carry the NPA 1 motif. The helical transmembrane segment at 117–137 (VAYMVAQCLGAICGVGLVKAF) threads the bilayer. At 138–158 (MMTPYKRLGGGANTVADGYST) the chain is on the extracellular side. The helical transmembrane segment at 159 to 179 (GTALGAEIIGTFVLVYTVFSA) threads the bilayer. Over 180 to 192 (TDPKRSARDSHVP) the chain is Cytoplasmic. The helical transmembrane segment at 193–213 (VLAPLPIGFAVFMVHLATIPI) threads the bilayer. Residues 214–240 (TGTGINPARSFGAAVIYNNEKAWDDHW) lie on the Extracellular side of the membrane. Residues 219 to 221 (NPA) carry the NPA 2 motif. A helical transmembrane segment spans residues 241–261 (IFWVGPFVGALAAAAYHQYIL). The Cytoplasmic segment spans residues 262-278 (RAAAIKALASFRSNPTN). 2 positions are modified to phosphoserine: serine 271 and serine 274.

The protein belongs to the MIP/aquaporin (TC 1.A.8) family. PIP (TC 1.A.8.11) subfamily. Expressed in roots and floral buds.

It localises to the cell membrane. In terms of biological role, aquaporins facilitate the transport of water and small neutral solutes across cell membranes. This Arabidopsis thaliana (Mouse-ear cress) protein is Probable aquaporin PIP2-8 (PIP2-8).